Consider the following 140-residue polypeptide: Small ribosomal subunit protein uS19 (140 aa).

The protein belongs to the universal ribosomal protein uS19 family.

Its function is as follows. Protein S19 forms a complex with S13 that binds strongly to the 16S ribosomal RNA. In Sulfurisphaera tokodaii (strain DSM 16993 / JCM 10545 / NBRC 100140 / 7) (Sulfolobus tokodaii), this protein is Small ribosomal subunit protein uS19 (rps19).